Reading from the N-terminus, the 757-residue chain is MPALPLDQLQITHKDPKTGKLRTSPALHPEQKADRYFVLYKPPPKDNIPALVEEYLERATFVANDLDWLLALPHDKFWCQVIFDETLQKCLDSYLRYVPRKFDEGVASAPEVVDMQKRLHRSVFLTFLRMSTHKESKDHFISPSAFGEILYNNFLFDIPKILDLCVLFGKGNSPLLQKMIGNIFTQQPSYYSDLDETLPTILQVFSNILQHCGLQGDGANTTPQKLEERGRLTPSDMPLLELKDIVLYLCDTCTTLWAFLDIFPLACQTFQKHDFCYRLASFYEAAIPEMESAIKKRRLEDSKLLGDLWQRLSHSRKKLMEIFHIILNQICLLPILESSCDNIQGFIEEFLQIFSSLLQEKRFLRDYDALFPVAEDISLLQQASSVLDETRTAYILQAVESAWEGVDRRKATDAKDPSVIEEPNGEPNGVTVTAEAVSQASSHPENSEEEECMGAAAAVGPAMCGVELDSLISQVKDLLPDLGEGFILACLEYYHYDPEQVINNILEERLAPTLSQLDRNLDREMKPDPTPLLTSRHNVFQNDEFDVFSRDSVDLSRVHKGKSTRKEENTRSLLNDKRAVAAQRQRYEQYSVVVEEVPLQPGESLPYHSVYYEDEYDDTYDGNQVGANDADSDDELISRRPFTIPQVLRTKVPREGQEEDDDDEEDDADEEAPKPDHFVQDPAVLREKAEARRMAFLAKKGYRHDSSTAVAGSPRGHGQSRETTQERRKKEANKATRANHNRRTMADRKRSKGMIPS.

Position 233 is a phosphothreonine (Thr-233). Ser-447 carries the post-translational modification Phosphoserine. The CUE domain occupies 467-510 (ELDSLISQVKDLLPDLGEGFILACLEYYHYDPEQVINNILEERL). 2 disordered regions span residues 617 to 687 (DDTY…VLRE) and 699 to 757 (KKGY…MIPS). Ser-632 carries the phosphoserine modification. Over residues 657-670 (QEEDDDDEEDDADE) the composition is skewed to acidic residues. A compositionally biased stretch (basic and acidic residues) spans 671-687 (EAPKPDHFVQDPAVLRE). The residue at position 713 (Ser-713) is a Phosphoserine. Basic and acidic residues predominate over residues 719–734 (QSRETTQERRKKEANK).

This sequence belongs to the ASCC2 family. In terms of assembly, identified in the ASCC complex that contains ASCC1, ASCC2 and ASCC3. Interacts directly with ASCC3. The ASCC complex interacts with ALKBH3. Interacts (via CUE domain) with 'Lys-63'-linked polyubiquitin chains, but not with 'Lys-48'-linked polyubiquitin chains. Part of the ASC-1 complex, that contains TRIP4, ASCC1, ASCC2 and ASCC3. Component of the RQT (ribosome quality control trigger) complex, that contains ASCC2, ASCC3 and TRIP4. Interacts with CSRP1. Interacts with PRPF8, a component of the spliceosome. Interacts with ZCCHC4. In terms of tissue distribution, ubiquitous.

Its subcellular location is the nucleus. The protein localises to the nucleus speckle. Its function is as follows. Ubiquitin-binding protein involved in DNA repair and rescue of stalled ribosomes. Plays a role in DNA damage repair as component of the ASCC complex. Recruits ASCC3 and ALKBH3 to sites of DNA damage by binding to polyubiquitinated proteins that have 'Lys-63'-linked polyubiquitin chains. Part of the ASC-1 complex that enhances NF-kappa-B, SRF and AP1 transactivation. Involved in activation of the ribosome quality control (RQC) pathway, a pathway that degrades nascent peptide chains during problematic translation. Specifically recognizes and binds RPS20/uS10 ubiquitinated by ZNF598, promoting recruitment of the RQT (ribosome quality control trigger) complex on stalled ribosomes, followed by disassembly of stalled ribosomes. The protein is Activating signal cointegrator 1 complex subunit 2 (ASCC2) of Homo sapiens (Human).